The sequence spans 212 residues: ATP phosphoribosyltransferase (212 aa).

This sequence belongs to the ATP phosphoribosyltransferase family. Short subfamily. As to quaternary structure, heteromultimer composed of HisG and HisZ subunits.

The protein resides in the cytoplasm. The enzyme catalyses 1-(5-phospho-beta-D-ribosyl)-ATP + diphosphate = 5-phospho-alpha-D-ribose 1-diphosphate + ATP. Its pathway is amino-acid biosynthesis; L-histidine biosynthesis; L-histidine from 5-phospho-alpha-D-ribose 1-diphosphate: step 1/9. In terms of biological role, catalyzes the condensation of ATP and 5-phosphoribose 1-diphosphate to form N'-(5'-phosphoribosyl)-ATP (PR-ATP). Has a crucial role in the pathway because the rate of histidine biosynthesis seems to be controlled primarily by regulation of HisG enzymatic activity. This chain is ATP phosphoribosyltransferase, found in Clostridium novyi (strain NT).